The following is a 339-amino-acid chain: Hairy/enhancer-of-split related with YRPW motif protein 2 (339 aa).

Residues 1 to 52 are disordered; the sequence is MKRPCEETTSESDLDETIDVGSENNYPGHATSSVMRSNSPTTTSQIMARKKR. A compositionally biased stretch (acidic residues) spans 8 to 18; the sequence is TTSESDLDETI. Residues 22-46 show a composition bias toward polar residues; it reads SENNYPGHATSSVMRSNSPTTTSQI. The transcriptional repression and interaction with NCOR1 and SIN3A stretch occupies residues 47–116; it reads MARKKRRGII…GGKGYFDAHA (70 aa). The bHLH domain occupies 48–103; it reads ARKKRRGIIEKRRRDRINNSLSELRRLVPTAFEKQGSAKLEKAEILQMTVDHLKML. The 36-residue stretch at 122-157 folds into the Orange domain; sequence MSIGFRECLTEVARYLSSVEGLDPSDPLRVRLVSHL. A disordered region spans residues 310 to 339; that stretch reads SVSAASSPQQTSTGTNNKPYQPWGTEVGAF. Residues 318–328 are compositionally biased toward polar residues; that stretch reads QQTSTGTNNKP. A YQPW motif motif is present at residues 329 to 332; that stretch reads YQPW.

The protein belongs to the HEY family. As to quaternary structure, may self-associate. Interacts with ARNT. Interacts with GATA4, GATA6, HES1 and HEYL. Interacts with HDAC1, NCOR1 and SIN3A. Highly expressed in the aorta, lower expression detected in the heart, brain, kidney, lung, muscle, ovary and testis.

It localises to the nucleus. Its function is as follows. Transcriptional repressor which functions as a downstream effector of Notch signaling in cardiovascular development. Specifically required for the Notch-induced endocardial epithelial to mesenchymal transition, which is itself criticial for cardiac valve and septum development. May be required in conjunction with HEY1 to specify arterial cell fate or identity. Promotes maintenance of neuronal precursor cells and glial versus neuronal fate specification. Binds preferentially to the canonical E box sequence 5'-CACGTG-3'. Represses transcription by the cardiac transcriptional activators GATA4 and GATA6 and by the neuronal bHLH factors ASCL1/MASH1 and NEUROD4/MATH3. The chain is Hairy/enhancer-of-split related with YRPW motif protein 2 (Hey2) from Mus musculus (Mouse).